Consider the following 464-residue polypeptide: 3-isopropylmalate dehydratase large subunit (464 aa).

[4Fe-4S] cluster is bound by residues C345, C405, and C408.

The protein belongs to the aconitase/IPM isomerase family. LeuC type 1 subfamily. As to quaternary structure, heterodimer of LeuC and LeuD. The cofactor is [4Fe-4S] cluster.

The catalysed reaction is (2R,3S)-3-isopropylmalate = (2S)-2-isopropylmalate. The protein operates within amino-acid biosynthesis; L-leucine biosynthesis; L-leucine from 3-methyl-2-oxobutanoate: step 2/4. Functionally, catalyzes the isomerization between 2-isopropylmalate and 3-isopropylmalate, via the formation of 2-isopropylmaleate. The polypeptide is 3-isopropylmalate dehydratase large subunit (Flavobacterium johnsoniae (strain ATCC 17061 / DSM 2064 / JCM 8514 / BCRC 14874 / CCUG 350202 / NBRC 14942 / NCIMB 11054 / UW101) (Cytophaga johnsonae)).